The sequence spans 5381 residues: Protein purity of essence (5381 aa).

6 disordered regions span residues 140–174 (KHPESSNKSIMSMAGSTTGGAGAGGSNDKESPKLE), 339–364 (QQQTAAAASTSQGSGGGLSSVQTSKD), 599–621 (SPETHDDNANTSSQERSGEQKSA), 683–709 (RNDSEQQSPPSTAAAVAAATGAGSSGS), 1162–1212 (SGGD…STET), and 1632–1659 (QAAQPNPSEESSQACDHSEGGEQRQSER). Residues 339-350 (QQQTAAAASTSQ) show a composition bias toward low complexity. Low complexity-rich tracts occupy residues 690 to 709 (SPPSTAAAVAAATGAGSSGS) and 1167 to 1176 (SSCTSAASSS). A compositionally biased stretch (polar residues) spans 1632-1646 (QAAQPNPSEESSQAC). Over residues 1647-1658 (DHSEGGEQRQSE) the composition is skewed to basic and acidic residues. The segment at 1815–1884 (KLCTFSQTQK…EDGSCQALSR (70 aa)) adopts a UBR-type zinc-finger fold. 6 disordered regions span residues 1917–1939 (KRSNTAPGATQQQHGAPARKDSI), 2443–2479 (KNTTNNPQGKSKGGGSAAAGKLLHRKASSQQHQKQLT), 2632–2652 (PDDSEDVPAPSSGPTPVTATQ), 3037–3143 (VSAG…DNNE), 3537–3562 (KQQQQQQQPPPAVVSASSKLRSDREK), and 4247–4280 (HHQQDAPAGTKPKSSKQQQSAGTETPPRKSKEAA). 4 stretches are compositionally biased toward polar residues: residues 1920-1930 (NTAPGATQQQH), 2470-2479 (SSQQHQKQLT), 2643-2652 (SGPTPVTATQ), and 3048-3058 (NVATDGSTLRT). Gly residues predominate over residues 3065–3075 (GSGGSESGGSG). Residues 3084–3104 (ARSSNFGDHPNTTPPRQSCSS) show a composition bias toward polar residues. Gly residues predominate over residues 3119-3132 (SGSGGSASVPGGGL). The tract at residues 4904–5374 (PSLKYILRFL…SFIEDLLASL (471 aa)) is UBR4 E3 catalytic module. Residues 5022–5136 (GLTCFICREG…SSYMQESTQR (115 aa)) form a HemiRING-type zinc finger. Positions 5025, 5028, 5074, and 5077 each coordinate Zn(2+). The 236-residue stretch at 5139-5374 (ISYTSSIHDL…SFIEDLLASL (236 aa)) folds into the UZI domain.

It belongs to the UBR4 family.

Functionally, has a role in growth of the perineurial glial layer of the larval peripheral nerve. May have a role in male fertility and eye development or function. May bind calmodulin. In Drosophila pseudoobscura pseudoobscura (Fruit fly), this protein is Protein purity of essence.